The chain runs to 191 residues: Ubiquinol-cytochrome c reductase iron-sulfur subunit (191 aa).

A helical membrane pass occupies residues 18 to 35 (ATAATGVVVTGAAVWPLI). The region spanning 94–189 (RDTSAENANK…AAFVDETTIK (96 aa)) is the Rieske domain. The disordered stretch occupies residues 95–116 (DTSAENANKPGAEATDENRTLP). Residues Cys133, His135, Cys153, and His156 each coordinate [2Fe-2S] cluster. Cys138 and Cys155 are oxidised to a cystine.

Belongs to the Rieske iron-sulfur protein family. In terms of assembly, the main subunits of complex b-c1 are: cytochrome b, cytochrome c1 and the Rieske protein. [2Fe-2S] cluster is required as a cofactor.

It localises to the cell membrane. The enzyme catalyses a quinol + 2 Fe(III)-[cytochrome c](out) = a quinone + 2 Fe(II)-[cytochrome c](out) + 2 H(+)(out). Its function is as follows. Component of the ubiquinol-cytochrome c reductase complex (complex III or cytochrome b-c1 complex), which is a respiratory chain that generates an electrochemical potential coupled to ATP synthesis. The protein is Ubiquinol-cytochrome c reductase iron-sulfur subunit (petA) of Rhodobacter capsulatus (strain ATCC BAA-309 / NBRC 16581 / SB1003).